The sequence spans 220 residues: Probable GTP-binding protein EngB (220 aa).

An EngB-type G domain is found at P24–P207. GTP is bound by residues G32–S39, G59–H63, D81–G84, T148–D151, and L185–A188. S39 and T61 together coordinate Mg(2+).

It belongs to the TRAFAC class TrmE-Era-EngA-EngB-Septin-like GTPase superfamily. EngB GTPase family. Mg(2+) is required as a cofactor.

Functionally, necessary for normal cell division and for the maintenance of normal septation. The protein is Probable GTP-binding protein EngB of Paraburkholderia phymatum (strain DSM 17167 / CIP 108236 / LMG 21445 / STM815) (Burkholderia phymatum).